The chain runs to 428 residues: Adenylosuccinate synthetase (428 aa).

Residues 12 to 18 (GDEGKGK) and 40 to 42 (GHT) contribute to the GTP site. Asp-13 (proton acceptor) is an active-site residue. 2 residues coordinate Mg(2+): Asp-13 and Gly-40. Residues 13–16 (DEGK), 38–41 (NAGH), Thr-129, Arg-143, Gln-224, Thr-239, and Arg-303 contribute to the IMP site. Catalysis depends on His-41, which acts as the Proton donor. Residue 299 to 305 (VTTGRIR) coordinates substrate. GTP contacts are provided by residues Arg-305, 331–333 (KVD), and 410–412 (AYG).

It belongs to the adenylosuccinate synthetase family. In terms of assembly, homodimer. It depends on Mg(2+) as a cofactor.

It is found in the cytoplasm. The catalysed reaction is IMP + L-aspartate + GTP = N(6)-(1,2-dicarboxyethyl)-AMP + GDP + phosphate + 2 H(+). It functions in the pathway purine metabolism; AMP biosynthesis via de novo pathway; AMP from IMP: step 1/2. In terms of biological role, plays an important role in the de novo pathway of purine nucleotide biosynthesis. Catalyzes the first committed step in the biosynthesis of AMP from IMP. The protein is Adenylosuccinate synthetase of Francisella tularensis subsp. tularensis (strain FSC 198).